A 683-amino-acid polypeptide reads, in one-letter code: Leishmanolysin-like peptidase (683 aa).

Zn(2+) is bound at residue H257. E258 is an active-site residue. Residues H261 and H364 each coordinate Zn(2+).

The protein belongs to the peptidase M8 family. It depends on Zn(2+) as a cofactor.

The protein localises to the cytoplasm. In terms of biological role, essential for the coordination of mitotic progression, and also plays a role in cell migration. The protein is Leishmanolysin-like peptidase (Invadolysin) of Drosophila melanogaster (Fruit fly).